A 163-amino-acid polypeptide reads, in one-letter code: Probable chemoreceptor glutamine deamidase CheD (163 aa).

This sequence belongs to the CheD family.

It catalyses the reaction L-glutaminyl-[protein] + H2O = L-glutamyl-[protein] + NH4(+). Its function is as follows. Probably deamidates glutamine residues to glutamate on methyl-accepting chemotaxis receptors (MCPs), playing an important role in chemotaxis. This Borreliella burgdorferi (strain ATCC 35210 / DSM 4680 / CIP 102532 / B31) (Borrelia burgdorferi) protein is Probable chemoreceptor glutamine deamidase CheD.